A 1241-amino-acid chain; its full sequence is MIENWPKKPEGSQWTDDQWKAVVANGRDILVAAAAGSGKTAVLVERIIKKIINEENPVDVDRLLVVTFTNAAAQEMKNRIGEALEKVLIDEPGSQHIRKQLSLLNKASISTIHSFCLQVIRGYYYMLDVDPRFRIANQTENELLKEEVLDDILEEEYGIEDNTIFFELVDRYTSDRSDDDLQRMILALHTESRAHPNPEKWLDKLVEAYDVEGKTIEDLVYASYLLEDVKFQLETAEQHIRKATELAMLPDGPAPRVETLQADLALLGTLSSAARESWTSVYEAMQNVSWQTLKRIKKSDYNEDIVKQVDSLRNKAKDEVKKLQEELFSRRPESFLRDFQDMHPVLEKLVQLVKVFTERFQAMKRDKGMVDFTDLEHFCLQILSEQSEDGEMKPSAVALQYRNKFAEVLVDEYQDTNFVQESIIKFVTKDSESEGNLFMVGDVKQSIYRFRLAEPGLFLGKYKRFTQEGLGGGMKIDLAKNFRSRHEVLAGTNFIFKQIMGEEVGEIDYDADAELKLGATYPEGEDVAAELLCIQQTEEEVIDGEEGAEVEKAQLEARLMAQRIKAMVDSGYEVYDRKTDSMRPVQYRDFVILLRSMPWAPQIMEELKLQGIPVYADLATGYFEATEVNIMMNVFRVIDNPMQDIPLAAVLRSPIVGLNDEELATLRAHGKKGSFYEVMSSFLKGAPLEEEKELHDKLEWFYNLLQGWREFARQQSLSDLIWKVYGETGYYDFVGGLPAGKQRQANLRVLYDRARQYEATSFRGLFRFLRFIERILERGDDMGTARALGEQEDVVRIMTIHKSKGLEFPVVFVAGLGRRFNTQDLMKRFLLHKDFGFGSQFIDPRKRIKYTTLSQLAIKRKMKMELIAEEMRVLYVALTRAKEKLILIGTVKDANKEMEKWLDAREYSEWLLPDHIRAGASCYLDWIAPSLYRHRDSEMLLELGQGSIPDEIYGYDTSWKVEVVDGNTLLAPEPVQEEKQELLEALREKKAVPLQSERKDEVYDRLMWKYGYEEATSHRAKQSVTEIKRNYQSEEGSDNAFIKKLRAPIQTRPRFMEKKGLTYAERGTAVHAVMQHVDLKKPITVEVLQEQIAGMVNKELLTFEQAEEIAVEKVISFFDSDLGKRVLAAKSVEREVPFTMMLAAEEAYQDWQGKSGESILVQGVIDCMIEEEDGITLIDFKTDTIEGKFPGGFEQAKPILEERYKVQLSLYAKALEKSLQHPVKEKCLYFFDGNHVIKVEE.

The 474-residue stretch at 12–485 (SQWTDDQWKA…IDLAKNFRSR (474 aa)) folds into the UvrD-like helicase ATP-binding domain. Position 33 to 40 (33 to 40 (AAAGSGKT)) interacts with ATP. In terms of domain architecture, UvrD-like helicase C-terminal spans 505–805 (GEIDYDADAE…RIMTIHKSKG (301 aa)).

It belongs to the helicase family. AddA subfamily. In terms of assembly, heterodimer of AddA and AddB/RexB. Mg(2+) is required as a cofactor.

The catalysed reaction is Couples ATP hydrolysis with the unwinding of duplex DNA by translocating in the 3'-5' direction.. It catalyses the reaction ATP + H2O = ADP + phosphate + H(+). Functionally, the heterodimer acts as both an ATP-dependent DNA helicase and an ATP-dependent, dual-direction single-stranded exonuclease. Recognizes the chi site generating a DNA molecule suitable for the initiation of homologous recombination. The AddA nuclease domain is required for chi fragment generation; this subunit has the helicase and 3' -&gt; 5' nuclease activities. The sequence is that of ATP-dependent helicase/nuclease subunit A from Bacillus thuringiensis subsp. konkukian (strain 97-27).